The sequence spans 292 residues: Phosphatidylserine decarboxylase proenzyme (292 aa).

Active-site charge relay system; for autoendoproteolytic cleavage activity residues include D89, H146, and S252. S252 functions as the Schiff-base intermediate with substrate; via pyruvic acid; for decarboxylase activity in the catalytic mechanism. The residue at position 252 (S252) is a Pyruvic acid (Ser); by autocatalysis.

This sequence belongs to the phosphatidylserine decarboxylase family. PSD-B subfamily. Prokaryotic type I sub-subfamily. Heterodimer of a large membrane-associated beta subunit and a small pyruvoyl-containing alpha subunit. Requires pyruvate as cofactor. Post-translationally, is synthesized initially as an inactive proenzyme. Formation of the active enzyme involves a self-maturation process in which the active site pyruvoyl group is generated from an internal serine residue via an autocatalytic post-translational modification. Two non-identical subunits are generated from the proenzyme in this reaction, and the pyruvate is formed at the N-terminus of the alpha chain, which is derived from the carboxyl end of the proenzyme. The autoendoproteolytic cleavage occurs by a canonical serine protease mechanism, in which the side chain hydroxyl group of the serine supplies its oxygen atom to form the C-terminus of the beta chain, while the remainder of the serine residue undergoes an oxidative deamination to produce ammonia and the pyruvoyl prosthetic group on the alpha chain. During this reaction, the Ser that is part of the protease active site of the proenzyme becomes the pyruvoyl prosthetic group, which constitutes an essential element of the active site of the mature decarboxylase.

It localises to the cell membrane. The catalysed reaction is a 1,2-diacyl-sn-glycero-3-phospho-L-serine + H(+) = a 1,2-diacyl-sn-glycero-3-phosphoethanolamine + CO2. Its pathway is phospholipid metabolism; phosphatidylethanolamine biosynthesis; phosphatidylethanolamine from CDP-diacylglycerol: step 2/2. Its function is as follows. Catalyzes the formation of phosphatidylethanolamine (PtdEtn) from phosphatidylserine (PtdSer). This Shewanella sp. (strain MR-4) protein is Phosphatidylserine decarboxylase proenzyme.